The sequence spans 506 residues: 2-isopropylmalate synthase (506 aa).

One can recognise a Pyruvate carboxyltransferase domain in the interval 8–272 (LIVFDTTLRD…ETGIQLKEIL (265 aa)). Asp-17, His-206, His-208, and Asn-242 together coordinate Mn(2+). The segment at 396 to 506 (ELEYVAVTVC…YLNAVNKALL (111 aa)) is regulatory domain.

This sequence belongs to the alpha-IPM synthase/homocitrate synthase family. LeuA type 1 subfamily. Homodimer. Requires Mn(2+) as cofactor.

The protein resides in the cytoplasm. The catalysed reaction is 3-methyl-2-oxobutanoate + acetyl-CoA + H2O = (2S)-2-isopropylmalate + CoA + H(+). It functions in the pathway amino-acid biosynthesis; L-leucine biosynthesis; L-leucine from 3-methyl-2-oxobutanoate: step 1/4. Functionally, catalyzes the condensation of the acetyl group of acetyl-CoA with 3-methyl-2-oxobutanoate (2-ketoisovalerate) to form 3-carboxy-3-hydroxy-4-methylpentanoate (2-isopropylmalate). In Methylacidiphilum infernorum (isolate V4) (Methylokorus infernorum (strain V4)), this protein is 2-isopropylmalate synthase.